A 1080-amino-acid chain; its full sequence is Putative bifunctional amine oxidase DDB_G0291301 (1080 aa).

The putative sarcosine oxidase stretch occupies residues Met1–Asn450. Residue Asp10–Ser40 coordinates FAD. A disordered region spans residues Ser445–Thr464. The tract at residues Asn450 to Lys1080 is putative L-amino-acid oxidase. A helical transmembrane segment spans residues Val508–Gly528. FAD is bound by residues Glu535, Arg544, and Gly563 to Ala564. Tyr886 is a binding site for substrate. Residues Glu978 and Val987 to Ser990 each bind FAD.

The protein in the N-terminal section; belongs to the MSOX/MTOX family. It in the C-terminal section; belongs to the flavin monoamine oxidase family. It depends on FAD as a cofactor.

It is found in the membrane. The enzyme catalyses sarcosine + O2 + H2O = formaldehyde + glycine + H2O2. It catalyses the reaction L-pipecolate + O2 = L-1-piperideine-6-carboxylate + H2O2 + H(+). The catalysed reaction is an L-alpha-amino acid + O2 + H2O = a 2-oxocarboxylate + H2O2 + NH4(+). In terms of biological role, catalyzes an oxidative deamination of predominantly hydrophobic and aromatic L-amino acids. Metabolizes sarcosine, L-pipecolic acid and L-proline. The protein is Putative bifunctional amine oxidase DDB_G0291301 of Dictyostelium discoideum (Social amoeba).